We begin with the raw amino-acid sequence, 299 residues long: Fluorinase (299 aa).

Residues Asp15, 20 to 22, Tyr76, Ser157, Asp210, Asn215, 269 to 270, and 277 to 279 each bind S-adenosyl-L-methionine; these read DDS, SR, and RNA.

It belongs to the SAM hydrolase / SAM-dependent halogenase family.

The catalysed reaction is fluoride + S-adenosyl-L-methionine = 5'-deoxy-5'-fluoroadenosine + L-methionine. Activity is not severely affected by most metal ions (Mg(2+), Mn(2+), Co(2+) and Fe(2+)), but both Cu(2+) and Zn(2+) are strong inhibitors. Catalyzes the formation of a C-F bond by combining S-adenosyl-L-methionine (SAM) and fluoride to generate 5'-fluoro-5'-deoxyadenosine (5'-FDA) and L-methionine. The chain is Fluorinase from Actinopolyspora mzabensis.